A 278-amino-acid polypeptide reads, in one-letter code: 4-deoxy-L-threo-5-hexosulose-uronate ketol-isomerase (278 aa).

Zn(2+)-binding residues include His-196, His-198, Glu-203, and His-245.

This sequence belongs to the KduI family. Zn(2+) is required as a cofactor.

The enzyme catalyses 5-dehydro-4-deoxy-D-glucuronate = 3-deoxy-D-glycero-2,5-hexodiulosonate. Its pathway is glycan metabolism; pectin degradation; 2-dehydro-3-deoxy-D-gluconate from pectin: step 4/5. Catalyzes the isomerization of 5-dehydro-4-deoxy-D-glucuronate to 3-deoxy-D-glycero-2,5-hexodiulosonate. The sequence is that of 4-deoxy-L-threo-5-hexosulose-uronate ketol-isomerase from Burkholderia cenocepacia (strain ATCC BAA-245 / DSM 16553 / LMG 16656 / NCTC 13227 / J2315 / CF5610) (Burkholderia cepacia (strain J2315)).